A 432-amino-acid chain; its full sequence is Glutamate-1-semialdehyde 2,1-aminomutase (432 aa).

Lys-266 is modified (N6-(pyridoxal phosphate)lysine).

It belongs to the class-III pyridoxal-phosphate-dependent aminotransferase family. HemL subfamily. Homodimer. Requires pyridoxal 5'-phosphate as cofactor.

It is found in the cytoplasm. The catalysed reaction is (S)-4-amino-5-oxopentanoate = 5-aminolevulinate. The protein operates within porphyrin-containing compound metabolism; protoporphyrin-IX biosynthesis; 5-aminolevulinate from L-glutamyl-tRNA(Glu): step 2/2. The protein is Glutamate-1-semialdehyde 2,1-aminomutase of Janthinobacterium sp. (strain Marseille) (Minibacterium massiliensis).